Reading from the N-terminus, the 564-residue chain is Putative ABC transporter ATP-binding protein PBPRA2240 (564 aa).

ABC transporter domains are found at residues 3–244 (IEFS…GIRE) and 299–533 (LTVN…ANLT). Residues 37–44 (GPSGSGKS) and 332–339 (GKNGSGKS) contribute to the ATP site.

It belongs to the ABC transporter superfamily.

The protein resides in the cell inner membrane. In terms of biological role, probably part of an ABC transporter complex. Responsible for energy coupling to the transport system. This chain is Putative ABC transporter ATP-binding protein PBPRA2240, found in Photobacterium profundum (strain SS9).